Here is a 405-residue protein sequence, read N- to C-terminus: Arginine biosynthesis bifunctional protein ArgJ (405 aa).

Threonine 152, lysine 178, threonine 189, glutamate 276, asparagine 400, and threonine 405 together coordinate substrate. The Nucleophile role is filled by threonine 189.

This sequence belongs to the ArgJ family. Heterotetramer of two alpha and two beta chains.

It localises to the cytoplasm. It carries out the reaction N(2)-acetyl-L-ornithine + L-glutamate = N-acetyl-L-glutamate + L-ornithine. It catalyses the reaction L-glutamate + acetyl-CoA = N-acetyl-L-glutamate + CoA + H(+). The protein operates within amino-acid biosynthesis; L-arginine biosynthesis; L-ornithine and N-acetyl-L-glutamate from L-glutamate and N(2)-acetyl-L-ornithine (cyclic): step 1/1. It participates in amino-acid biosynthesis; L-arginine biosynthesis; N(2)-acetyl-L-ornithine from L-glutamate: step 1/4. Functionally, catalyzes two activities which are involved in the cyclic version of arginine biosynthesis: the synthesis of N-acetylglutamate from glutamate and acetyl-CoA as the acetyl donor, and of ornithine by transacetylation between N(2)-acetylornithine and glutamate. This chain is Arginine biosynthesis bifunctional protein ArgJ, found in Pseudomonas syringae pv. syringae (strain B728a).